The following is a 911-amino-acid chain: Transferrin-binding protein A (911 aa).

The signal sequence occupies residues 1 to 24; it reads MQQQHLFRLNILCLSLMTALPAYA. A TonB box motif is present at residues 38-45; the sequence is DTIQVKAK. The 126-residue stretch at 51 to 176 folds into the TBDR plug domain; that stretch reads RDNEVTGLGK…LAGSVAFQTK (126 aa). In terms of domain architecture, TBDR beta-barrel spans 187–911; that stretch reads QWGIQSKTAY…NYTFSLEMKF (725 aa). Residues 894–911 carry the TonB C-terminal box motif; it reads NRYAAPGRNYTFSLEMKF.

Belongs to the TonB-dependent receptor family. As to quaternary structure, binds both human apo- and holo-transferrin (TF), via the TF C-terminus. Forms a large complex with TF and TbpB.

Its subcellular location is the cell outer membrane. Neisseria acquires iron by extracting it from serum transferrin (TF) in its human host. Acts as a TF receptor and is required for TF utilization. Binds both apo- and holo-TF, via the TF C-terminus. This is Transferrin-binding protein A from Neisseria meningitidis serogroup B.